The primary structure comprises 371 residues: MEPDRQAEIAALDSALTTVERVLDVEGLRSRIEKLEHEASDPKLWDDQTRAQRVTSELSHTQGELRRVEELRRRLEDLPVLYELAAEEEGAAAGEALAEADAEFKALRADIEATEVRTLLSGEYDEREALVTIRSGAGGVDAADWAEMLMRMYVRWAEQHKYPVEVFDTSYAEEAGIKSATFAVHAPFAYGTLSVEQGTHRLVRISPFDNQSRRQTSFAEVEVLPVVETTDHIDIPEGDVRVDVYRSSGPGGQSVNTTDSAVRLTHIPTGIVVTCQNEKSQLQNKVAAMRVLQAKLLERKRIEERAELDALKGDGGSSWGNQMRSYVLHPYQMVKDLRTEYEVGNPATVLDGDIDGFLEAGIRWRNRKDDD.

Gln253 carries the N5-methylglutamine modification.

Belongs to the prokaryotic/mitochondrial release factor family. Post-translationally, methylated by PrmC. Methylation increases the termination efficiency of RF2.

The protein resides in the cytoplasm. Its function is as follows. Peptide chain release factor 2 directs the termination of translation in response to the peptide chain termination codons UGA and UAA. The polypeptide is Peptide chain release factor 2 (Mycobacterium marinum (strain ATCC BAA-535 / M)).